Reading from the N-terminus, the 297-residue chain is 4-hydroxy-tetrahydrodipicolinate synthase (297 aa).

Threonine 46 is a binding site for pyruvate. Tyrosine 134 acts as the Proton donor/acceptor in catalysis. Catalysis depends on lysine 162, which acts as the Schiff-base intermediate with substrate. Isoleucine 204 contributes to the pyruvate binding site.

The protein belongs to the DapA family. Homotetramer; dimer of dimers.

The protein resides in the cytoplasm. It catalyses the reaction L-aspartate 4-semialdehyde + pyruvate = (2S,4S)-4-hydroxy-2,3,4,5-tetrahydrodipicolinate + H2O + H(+). The protein operates within amino-acid biosynthesis; L-lysine biosynthesis via DAP pathway; (S)-tetrahydrodipicolinate from L-aspartate: step 3/4. Its function is as follows. Catalyzes the condensation of (S)-aspartate-beta-semialdehyde [(S)-ASA] and pyruvate to 4-hydroxy-tetrahydrodipicolinate (HTPA). This is 4-hydroxy-tetrahydrodipicolinate synthase from Stenotrophomonas maltophilia (strain K279a).